The primary structure comprises 765 residues: LPS-assembly protein LptD (765 aa).

The first 18 residues, 1-18 (MQIRYFLALSLLPQVVLA), serve as a signal peptide directing secretion.

It belongs to the LptD family. In terms of assembly, component of the lipopolysaccharide transport and assembly complex. Interacts with LptE and LptA.

Its subcellular location is the cell outer membrane. Together with LptE, is involved in the assembly of lipopolysaccharide (LPS) at the surface of the outer membrane. The sequence is that of LPS-assembly protein LptD from Shewanella sp. (strain ANA-3).